A 356-amino-acid chain; its full sequence is D-alanine--D-alanine ligase (356 aa).

Positions 134-339 (KQLFEHRGLP…YPELITKLIE (206 aa)) constitute an ATP-grasp domain. 167-222 (NDKLNYPVFVKPANLGSSIGISKCSNEVELKEGIKEAFQFDRKLVIEQGVNAREIE) is an ATP binding site. The Mg(2+) site is built by D293, E306, and N308.

This sequence belongs to the D-alanine--D-alanine ligase family. Mg(2+) is required as a cofactor. It depends on Mn(2+) as a cofactor.

The protein resides in the cytoplasm. The enzyme catalyses 2 D-alanine + ATP = D-alanyl-D-alanine + ADP + phosphate + H(+). The protein operates within cell wall biogenesis; peptidoglycan biosynthesis. Its function is as follows. Cell wall formation. The polypeptide is D-alanine--D-alanine ligase (Staphylococcus aureus (strain MRSA252)).